A 120-amino-acid chain; its full sequence is U13-lycotoxin-Ls1a (120 aa).

An N-terminal signal peptide occupies residues 1 to 16 (MKILFVLISILHAVYC). A propeptide spanning residues 17–54 (FSSEEDVDSAYLANELEPVEDINSEQYAALEPKEEHER) is cleaved from the precursor. Intrachain disulfides connect C56/C70, C63/C76, C69/C87, and C78/C85. The Agouti domain maps to 56–95 (CADMGQDCKDDCDCCLNIATCNCWFGRYFCSCTFGDYQTC).

Belongs to the neurotoxin 05 (agouti) family. Post-translationally, contains 6 disulfide bonds. Expressed by the venom gland.

The protein resides in the secreted. This chain is U13-lycotoxin-Ls1a, found in Lycosa singoriensis (Wolf spider).